Reading from the N-terminus, the 100-residue chain is Urease subunit gamma (100 aa).

This sequence belongs to the urease gamma subunit family. Probable heterotrimer of UreA (gamma), UreB (beta) and UreC (alpha) subunits. Three heterotrimers associate to form the active enzyme. The trimeric urease interacts with an accessory complex composed of UreD, UreF and UreG, which is required for the assembly of the nickel containing metallocenter of UreC. The UreE protein may also play a direct role in nickel transfer to the urease apoprotein.

Its subcellular location is the cytoplasm. The catalysed reaction is urea + 2 H2O + H(+) = hydrogencarbonate + 2 NH4(+). Its pathway is nitrogen metabolism; urea degradation; CO(2) and NH(3) from urea (urease route): step 1/1. The protein is Urease subunit gamma of Proteus mirabilis (strain HI4320).